Consider the following 531-residue polypeptide: Putative UDP-glucuronosyltransferase ugt-46 (531 aa).

The first 17 residues, M1–S17, serve as a signal peptide directing secretion. Residue N304 is glycosylated (N-linked (GlcNAc...) asparagine). Residues V493 to Y513 form a helical membrane-spanning segment.

Belongs to the UDP-glycosyltransferase family.

The protein resides in the membrane. It catalyses the reaction glucuronate acceptor + UDP-alpha-D-glucuronate = acceptor beta-D-glucuronoside + UDP + H(+). The chain is Putative UDP-glucuronosyltransferase ugt-46 (ugt-46) from Caenorhabditis elegans.